A 564-amino-acid chain; its full sequence is Ferric reductase transmembrane component 1 (564 aa).

Asn-4 carries an N-linked (GlcNAc...) asparagine glycan. The next 2 helical transmembrane spans lie at 10–30 and 73–93; these read TVIA…MFWL and VILT…FIGM. Asn-111 carries N-linked (GlcNAc...) asparagine glycosylation. A helical membrane pass occupies residues 117–137; the sequence is VAARLGFLACGLYVTSYFFSI. The 134-residue stretch at 121–254 folds into the Ferric oxidoreductase domain; that stretch reads LGFLACGLYV…VYMKVCVAVY (134 aa). Residues His-157 and His-171 each contribute to the heme site. Helical transmembrane passes span 160-180 and 193-213; these read LSQY…GLAA and IIGY…LPFF. 2 residues coordinate heme: His-225 and His-239. One can recognise an FAD-binding FR-type domain in the interval 255–410; that stretch reads VFDRGCRMLR…DGPYGPVSNP (156 aa). Asn-268 is a glycosylation site (N-linked (GlcNAc...) asparagine). 317–323 contributes to the FAD binding site; sequence HPFTIAS. Asn-360 carries N-linked (GlcNAc...) asparagine glycosylation. Residues Ser-362, Ser-381, and Ser-383 each carry the phosphoserine modification. The chain crosses the membrane as a helical span at residues 417–437; the sequence is LFLFAGGVGVSYILPIILDTI. 419-427 serves as a coordination point for NAD(+); the sequence is LFAGGVGVS. N-linked (GlcNAc...) asparagine glycosylation is present at Asn-501.

Belongs to the ferric reductase (FRE) family. FAD is required as a cofactor. The cofactor is heme.

The protein localises to the cell membrane. The catalysed reaction is 2 a Fe(II)-siderophore + NADP(+) + H(+) = 2 a Fe(III)-siderophore + NADPH. Metalloreductase responsible for reducing extracellular iron and copper prior to import. Catalyzes the reductive uptake of Fe(3+)-salts and Fe(3+) bound to catecholate or hydroxamate siderophores. Fe(3+) is reduced to Fe(2+), which then dissociates from the siderophore and can be imported by the high-affinity Fe(2+) transport complex in the plasma membrane. Also participates in Cu(2+) reduction and Cu(+) uptake. This is Ferric reductase transmembrane component 1 (frp1) from Schizosaccharomyces pombe (strain 972 / ATCC 24843) (Fission yeast).